Here is a 339-residue protein sequence, read N- to C-terminus: Holliday junction branch migration complex subunit RuvB (339 aa).

The segment at 1-181 (MEERLVSGYE…FGMVHRLEFY (181 aa)) is large ATPase domain (RuvB-L). Residues leucine 20, arginine 21, glycine 62, lysine 65, threonine 66, threonine 67, 128-130 (EDF), arginine 171, tyrosine 181, and arginine 218 contribute to the ATP site. Threonine 66 provides a ligand contact to Mg(2+). The segment at 182 to 252 (SVEELMLIIN…NAKAALDLLE (71 aa)) is small ATPAse domain (RuvB-S). Positions 255–339 (ELGLDPTDRL…NKNAGELSLW (85 aa)) are head domain (RuvB-H). DNA contacts are provided by arginine 310 and arginine 315.

This sequence belongs to the RuvB family. Homohexamer. Forms an RuvA(8)-RuvB(12)-Holliday junction (HJ) complex. HJ DNA is sandwiched between 2 RuvA tetramers; dsDNA enters through RuvA and exits via RuvB. An RuvB hexamer assembles on each DNA strand where it exits the tetramer. Each RuvB hexamer is contacted by two RuvA subunits (via domain III) on 2 adjacent RuvB subunits; this complex drives branch migration. In the full resolvosome a probable DNA-RuvA(4)-RuvB(12)-RuvC(2) complex forms which resolves the HJ.

Its subcellular location is the cytoplasm. The enzyme catalyses ATP + H2O = ADP + phosphate + H(+). Its function is as follows. The RuvA-RuvB-RuvC complex processes Holliday junction (HJ) DNA during genetic recombination and DNA repair, while the RuvA-RuvB complex plays an important role in the rescue of blocked DNA replication forks via replication fork reversal (RFR). RuvA specifically binds to HJ cruciform DNA, conferring on it an open structure. The RuvB hexamer acts as an ATP-dependent pump, pulling dsDNA into and through the RuvAB complex. RuvB forms 2 homohexamers on either side of HJ DNA bound by 1 or 2 RuvA tetramers; 4 subunits per hexamer contact DNA at a time. Coordinated motions by a converter formed by DNA-disengaged RuvB subunits stimulates ATP hydrolysis and nucleotide exchange. Immobilization of the converter enables RuvB to convert the ATP-contained energy into a lever motion, pulling 2 nucleotides of DNA out of the RuvA tetramer per ATP hydrolyzed, thus driving DNA branch migration. The RuvB motors rotate together with the DNA substrate, which together with the progressing nucleotide cycle form the mechanistic basis for DNA recombination by continuous HJ branch migration. Branch migration allows RuvC to scan DNA until it finds its consensus sequence, where it cleaves and resolves cruciform DNA. In Carboxydothermus hydrogenoformans (strain ATCC BAA-161 / DSM 6008 / Z-2901), this protein is Holliday junction branch migration complex subunit RuvB.